Consider the following 406-residue polypeptide: Alpha-1-antitrypsin (406 aa).

The N-terminal stretch at 1–24 (MTSSISWGLLLLAGLCCLVPSFLA) is a signal peptide. At serine 33 the chain carries Phosphoserine. Asparagine 59, asparagine 96, and asparagine 260 each carry an N-linked (GlcNAc...) asparagine glycan. Residues 362–381 (GTTVLEAVPMSIPPDVCFKN) are RCL. Serine 372 bears the Phosphoserine mark.

It belongs to the serpin family. As to quaternary structure, interacts with CELA2A. Interacts with ERGIC3 and LMAN1/ERGIC53. Interacts with PRSS1/Trypsin. Plasma.

Its subcellular location is the secreted. Functionally, inhibitor of serine proteases. Can inhibit elastase, trypsin, chymotrypsin and plasmin. This chain is Alpha-1-antitrypsin, found in Meriones unguiculatus (Mongolian jird).